The following is a 404-amino-acid chain: Glycosyltransferase GlyB (404 aa).

The tract at residues Met-1–Arg-267 is GT8 domain. UDP contacts are provided by residues Asn-9–Tyr-14 and Asp-103–Ser-104. 3 residues coordinate Mn(2+): Asp-103, Asp-105, and His-228. His-228 to Lys-233 is a UDP binding site.

It in the N-terminal section; belongs to the glycosyltransferase 8 family.

Functionally, may be involved in the polymorphic O-glycosylation of the serine-rich repeat protein PsrP. Has equal hydrolytic activity against both UDP-galactose and UDP-glucose; no glycosyltransferase activity has been seen with tested substrates. This chain is Glycosyltransferase GlyB, found in Streptococcus pneumoniae serotype 4 (strain ATCC BAA-334 / TIGR4).